Consider the following 313-residue polypeptide: MPTPKAFALLGPTAGGKTALALKIAETLPVEIISLDSALVYTGMDIGTAKPSASERAFVPHHLIDIITPVQTYSAARFVEDCTRLVGEISSRGRFALIVGGTMMYFRALTQGLNDLPEADACLRADLDEQKQMYGLDFLYRTLQQVDPETACRLKPNDSQRIGRALEVYYLTGKPMSTHLGSPTSHTLPFDLHTAALIPENRARLHENIALRFHLMLEQGFIGEVENLRRLYPSLTADSPAIRCVGYRQAWEYLDGKTDFPAFVEKGIAATRQLAKRQLTWLRKTPLDCVTDPFSDGNSCTRLIEAAKRFFGA.

11–18 serves as a coordination point for ATP; that stretch reads GPTAGGKT. Position 13–18 (13–18) interacts with substrate; the sequence is TAGGKT. 3 interaction with substrate tRNA regions span residues 36–39, 160–164, and 243–248; these read DSAL, QRIGR, and RCVGYR.

Belongs to the IPP transferase family. In terms of assembly, monomer. Mg(2+) serves as cofactor.

The catalysed reaction is adenosine(37) in tRNA + dimethylallyl diphosphate = N(6)-dimethylallyladenosine(37) in tRNA + diphosphate. Functionally, catalyzes the transfer of a dimethylallyl group onto the adenine at position 37 in tRNAs that read codons beginning with uridine, leading to the formation of N6-(dimethylallyl)adenosine (i(6)A). The polypeptide is tRNA dimethylallyltransferase (Neisseria meningitidis serogroup C / serotype 2a (strain ATCC 700532 / DSM 15464 / FAM18)).